Consider the following 473-residue polypeptide: Photosystem II CP43 reaction center protein (473 aa).

Positions 1-14 (MKTLYSLRRFYPVE) are excised as a propeptide. At T15 the chain carries N-acetylthreonine. T15 bears the Phosphothreonine mark. 5 helical membrane-spanning segments follow: residues 69–93 (LFEV…PHLA), 134–155 (LIGP…KDRS), 178–200 (KALY…RKIT), 255–275 (KPFA…LSYS), and 291–312 (WFNN…ASQA). A [CaMn4O5] cluster-binding site is contributed by E367. Residues 447-471 (RARAAAAGFEKGIDRDFEPVLSMNP) form a helical membrane-spanning segment.

It belongs to the PsbB/PsbC family. PsbC subfamily. PSII is composed of 1 copy each of membrane proteins PsbA, PsbB, PsbC, PsbD, PsbE, PsbF, PsbH, PsbI, PsbJ, PsbK, PsbL, PsbM, PsbT, PsbX, PsbY, PsbZ, Psb30/Ycf12, at least 3 peripheral proteins of the oxygen-evolving complex and a large number of cofactors. It forms dimeric complexes. Binds multiple chlorophylls and provides some of the ligands for the Ca-4Mn-5O cluster of the oxygen-evolving complex. It may also provide a ligand for a Cl- that is required for oxygen evolution. PSII binds additional chlorophylls, carotenoids and specific lipids. serves as cofactor.

It localises to the plastid. It is found in the chloroplast thylakoid membrane. One of the components of the core complex of photosystem II (PSII). It binds chlorophyll and helps catalyze the primary light-induced photochemical processes of PSII. PSII is a light-driven water:plastoquinone oxidoreductase, using light energy to abstract electrons from H(2)O, generating O(2) and a proton gradient subsequently used for ATP formation. This is Photosystem II CP43 reaction center protein from Cycas taitungensis (Prince sago).